Here is a 22-residue protein sequence, read N- to C-terminus: ATVYNNDGTQVDVGGRFDVALG.

It belongs to the Gram-negative porin family. Disulfide bond interactions within and between MOMP molecules and other components form high molecular-weight oligomers.

It is found in the cell outer membrane. In terms of biological role, structural rigidity of the outer membrane of elementary bodies and porin forming, permitting diffusion of solutes through the intracellular reticulate body membrane. This is Major outer membrane protein (ompH) from Avibacterium gallinarum (Pasteurella gallinarum).